We begin with the raw amino-acid sequence, 232 residues long: Ribonuclease 3 (232 aa).

Residues 5–134 (QTVLKNHFAI…FLGALLLDKD (130 aa)) form the RNase III domain. Residue glutamate 47 coordinates Mg(2+). The active site involves aspartate 51. Mg(2+)-binding residues include aspartate 120 and glutamate 123. Residue glutamate 123 is part of the active site. Positions 160–229 (DYKTHLQELL…AKNAVEKGLD (70 aa)) constitute a DRBM domain.

The protein belongs to the ribonuclease III family. Homodimer. It depends on Mg(2+) as a cofactor.

Its subcellular location is the cytoplasm. The catalysed reaction is Endonucleolytic cleavage to 5'-phosphomonoester.. In terms of biological role, digests double-stranded RNA. Involved in the processing of primary rRNA transcript to yield the immediate precursors to the large and small rRNAs (23S and 16S). Processes some mRNAs, and tRNAs when they are encoded in the rRNA operon. Processes pre-crRNA and tracrRNA of type II CRISPR loci if present in the organism. The protein is Ribonuclease 3 of Streptococcus pneumoniae (strain Hungary19A-6).